Consider the following 195-residue polypeptide: uncharacterized protein (195 aa).

This is an uncharacterized protein from Archaeoglobus fulgidus (strain ATCC 49558 / DSM 4304 / JCM 9628 / NBRC 100126 / VC-16).